A 250-amino-acid chain; its full sequence is MEELDITSVGQFQTLVRYNNPVLVVKHPDKKGGAPLTEIEMKRPQTAGALLDTKRETEEILNSILPPRCWEEDGQLWQQSVSSTPATRQDVINLQEMLDTRLQQTQARETGICPVRRELYSQCFDEIIRQVTINCSERGLLLLRIRDEIAMSMEAYETLYCSSVAFGMRKALQAHEEKEMLRDRVKTLELDKEALEEIIADMKLKQEQAERRNAELRASEEKKFTEEITFLKKTNAQLKAQLEGITAPKK.

Residues 168-250 adopt a coiled-coil conformation; it reads MRKALQAHEE…QLEGITAPKK (83 aa).

Belongs to the inner dynein arm light chain family.

It is found in the cell projection. It localises to the cilium. The protein localises to the dynein axonemal particle. Functionally, may play a dynamic role in flagellar motility. The chain is Putative inner dynein arm light chain, axonemal from Drosophila melanogaster (Fruit fly).